We begin with the raw amino-acid sequence, 382 residues long: Sialidase (382 aa).

Arginine 37 provides a ligand contact to substrate. A disulfide bridge connects residues cysteine 42 and cysteine 103. The active-site Proton acceptor is the aspartate 62. BNR repeat units follow at residues 71–82 (ARSTDGGKTWNK), 145–156 (YKSTDDGVTFSK), and 210–220 (IYSTDGITWSL). Arginine 246 is a binding site for substrate. Residues 254–265 (FETKDFGKTWTE) form a BNR 4 repeat. Arginine 309 contacts substrate. The active-site Nucleophile is the tyrosine 342. Glutamate 361 is a catalytic residue.

This sequence belongs to the glycosyl hydrolase 33 family. As to quaternary structure, monomer.

The enzyme catalyses Hydrolysis of alpha-(2-&gt;3)-, alpha-(2-&gt;6)-, alpha-(2-&gt;8)- glycosidic linkages of terminal sialic acid residues in oligosaccharides, glycoproteins, glycolipids, colominic acid and synthetic substrates.. Functionally, cleaves the terminal sialic acid (N-acetyl neuraminic acid) from carbohydrate chains in glycoproteins providing free sialic acid which can be used as carbon and energy sources. Sialidases have been suggested to be pathogenic factors in microbial infections. The chain is Sialidase (nanH) from Salmonella typhimurium (strain LT2 / SGSC1412 / ATCC 700720).